A 520-amino-acid polypeptide reads, in one-letter code: MQTPKPTLELLTCDAAYRENPTALFHQVCGDRPATLLLESADIDSKDDLKSLLLVDSALRITALGDTVTIQALSDNGASLLPLLDTALPAGVENDVLPAGRVLRFPPVSPLLDEDARLCSLSVFDAFRLLQGVVNIPTQEREAMFFGGLFAYDLVAGFEALPHLEAGNNCPDYCFYLAETLMVIDHQKKSTRIQASLFTASDREKQRLNARLAYLSQQLTQPAPPLPVTPVPDMRCECNQSDDAFGAVVRQLQKAIRAGEIFQVVPSRRFSLPCPSPLAAYYVLKKSNPSPYMFFMQDNDFTLFGASPESSLKYDAASRQIEIYPIAGTRPRGRRADGTLDRDLDSRIELDMRTDHKELSEHLMLVDLARNDLARICTPGSRYVADLTKVDRYSYVMHLVSRVVGELRHDLDALHAYRACMNMGTLSGAPKVRAMQLIADAEGQRRGSYGGAVGYFTAHGDLDTCIVIRSALVENGIATVQAGAGIVLDSVPQSEADETRNKARAVLRAIATAHHAQETF.

L-tryptophan is bound by residues Ser-40, Lys-50, and 291 to 293 (PYM). Chorismate is bound at residue 328-329 (GT). Glu-361 provides a ligand contact to Mg(2+). Residues Tyr-449, Arg-469, 483–485 (GAG), and Gly-485 contribute to the chorismate site. Residue Glu-498 coordinates Mg(2+).

This sequence belongs to the anthranilate synthase component I family. As to quaternary structure, homodimer. In fact, exists in a monomer-dimer equilibrium in solution, shifted spontaneously in favor of the dimer; the monomer has a reduced activity compared with the dimer. Heterotetramer consisting of two non-identical subunits: a beta subunit (TrpG) and a large alpha subunit (TrpE) (Potential). It depends on Mg(2+) as a cofactor.

It carries out the reaction chorismate + L-glutamine = anthranilate + pyruvate + L-glutamate + H(+). Its pathway is amino-acid biosynthesis; L-tryptophan biosynthesis; L-tryptophan from chorismate: step 1/5. Its activity is regulated as follows. Cooperatively feedback inhibited by tryptophan. Part of a heterotetrameric complex that catalyzes the two-step biosynthesis of anthranilate, an intermediate in the biosynthesis of L-tryptophan. In the first step, the glutamine-binding beta subunit (TrpG) of anthranilate synthase (AS) provides the glutamine amidotransferase activity which generates ammonia as a substrate that, along with chorismate, is used in the second step, catalyzed by the large alpha subunit of AS (TrpE) to produce anthranilate. In the absence of TrpG, TrpE can synthesize anthranilate directly from chorismate and high concentrations of ammonia. The sequence is that of Anthranilate synthase component 1 (trpE) from Salmonella typhimurium (strain LT2 / SGSC1412 / ATCC 700720).